Consider the following 147-residue polypeptide: Small ribosomal subunit protein uS12 (147 aa).

It belongs to the universal ribosomal protein uS12 family. As to quaternary structure, part of the 30S ribosomal subunit.

With S4 and S5 plays an important role in translational accuracy. Located at the interface of the 30S and 50S subunits. The protein is Small ribosomal subunit protein uS12 of Thermofilum pendens (strain DSM 2475 / Hrk 5).